Consider the following 41-residue polypeptide: Large ribosomal subunit protein bL36 (41 aa).

The tract at residues 1 to 21 (MKIRNSLKSLRGRHRDNQLVR) is disordered.

It belongs to the bacterial ribosomal protein bL36 family.

The sequence is that of Large ribosomal subunit protein bL36 from Methylobacterium sp. (strain 4-46).